The chain runs to 746 residues: Exostosin-1 (746 aa).

The Cytoplasmic segment spans residues 1–5 (MQAKK). A helical; Signal-anchor for type II membrane protein transmembrane segment spans residues 6-26 (RYFILLSAGSCLALLFYFGGV). Residues 27 to 746 (QFRASRSHSR…RKKYRDIERL (720 aa)) lie on the Lumenal side of the membrane. An N-linked (GlcNAc...) asparagine glycan is attached at asparagine 89. 2 cysteine pairs are disulfide-bonded: cysteine 98-cysteine 103 and cysteine 109-cysteine 152. The a protein site is built by leucine 166 and tyrosine 203. UDP contacts are provided by lysine 267, lysine 269, tyrosine 271, and arginine 280. Cysteine 298 and cysteine 312 are disulfide-bonded. Histidine 300 provides a ligand contact to a protein. Positions 319 and 324 each coordinate UDP. Residue asparagine 330 is glycosylated (N-linked (GlcNAc...) asparagine). 2 disulfides stabilise this stretch: cysteine 334/cysteine 355 and cysteine 652/cysteine 704. Positions 346 and 349 each coordinate UDP.

It belongs to the glycosyltransferase 47 family. As to quaternary structure, part of the heparan sulfate polymerase, a dimeric complex composed of EXT1 and EXT2. Could also form homooligomeric complexes. Interacts with NDST1. In terms of processing, N-glycosylated.

It localises to the golgi apparatus membrane. The protein resides in the golgi apparatus. The protein localises to the cis-Golgi network membrane. It is found in the endoplasmic reticulum membrane. It carries out the reaction 3-O-{alpha-D-GlcNAc-[(1-&gt;4)-beta-D-GlcA-(1-&gt;4)-alpha-D-GlcNAc](n)-(1-&gt;4)-beta-D-GlcA-(1-&gt;3)-beta-D-Gal-(1-&gt;3)-beta-D-Gal-(1-&gt;4)-beta-D-Xyl}-L-seryl-[protein] + UDP-alpha-D-glucuronate = 3-O-{[(1-&gt;4)-beta-D-GlcA-(1-&gt;4)-alpha-D-GlcNAc](n+1)-(1-&gt;4)-beta-D-GlcA-(1-&gt;3)-beta-D-Gal-(1-&gt;3)-beta-D-Gal-(1-&gt;4)-beta-D-Xyl}-L-seryl-[protein] + UDP + H(+). The protein operates within protein modification; protein glycosylation. Its function is as follows. Glycosyltransferase forming with EXT2 the heterodimeric heparan sulfate polymerase which catalyzes the elongation of the heparan sulfate glycan backbone. Glycan backbone extension consists in the alternating transfer of (1-&gt;4)-beta-D-GlcA and (1-&gt;4)-alpha-D-GlcNAc residues from their respective UDP-sugar donors. Both EXT1 and EXT2 are required for the full activity of the polymerase since EXT1 bears the N-acetylglucosaminyl-proteoglycan 4-beta-glucuronosyltransferase activity within the complex while EXT2 carries the glucuronosyl-N-acetylglucosaminyl-proteoglycan 4-alpha-N-acetylglucosaminyltransferase activity. Heparan sulfate proteoglycans are ubiquitous components of the extracellular matrix and play an important role in tissue homeostasis and signaling. The protein is Exostosin-1 of Cricetulus griseus (Chinese hamster).